A 121-amino-acid chain; its full sequence is Large ribosomal subunit protein uL14c (121 aa).

Component of the chloroplast large ribosomal subunit (LSU). Mature 70S chloroplast ribosomes of higher plants consist of a small (30S) and a large (50S) subunit. The 30S small subunit contains 1 molecule of ribosomal RNA (16S rRNA) and 24 different proteins. The 50S large subunit contains 3 rRNA molecules (23S, 5S and 4.5S rRNA) and 33 different proteins.

The protein resides in the plastid. Its subcellular location is the chloroplast. Functionally, component of the chloroplast ribosome (chloro-ribosome), a dedicated translation machinery responsible for the synthesis of chloroplast genome-encoded proteins, including proteins of the transcription and translation machinery and components of the photosynthetic apparatus. In Spinacia oleracea (Spinach), this protein is Large ribosomal subunit protein uL14c.